A 73-amino-acid polypeptide reads, in one-letter code: Large ribosomal subunit protein bL31 (73 aa).

The Zn(2+) site is built by C16, C18, C36, and C39.

It belongs to the bacterial ribosomal protein bL31 family. Type A subfamily. Part of the 50S ribosomal subunit. It depends on Zn(2+) as a cofactor.

Its function is as follows. Binds the 23S rRNA. The polypeptide is Large ribosomal subunit protein bL31 (Desulfosudis oleivorans (strain DSM 6200 / JCM 39069 / Hxd3) (Desulfococcus oleovorans)).